The primary structure comprises 265 residues: 4-hydroxy-tetrahydrodipicolinate reductase (265 aa).

NAD(+) is bound by residues 7–12 (GASGRM) and Asp33. Arg34 is an NADP(+) binding site. NAD(+) contacts are provided by residues 96–98 (GTT) and 120–123 (AANM). His153 serves as the catalytic Proton donor/acceptor. His154 serves as a coordination point for (S)-2,3,4,5-tetrahydrodipicolinate. Lys157 functions as the Proton donor in the catalytic mechanism. 163 to 164 (GT) is a binding site for (S)-2,3,4,5-tetrahydrodipicolinate.

The protein belongs to the DapB family.

The protein localises to the cytoplasm. It carries out the reaction (S)-2,3,4,5-tetrahydrodipicolinate + NAD(+) + H2O = (2S,4S)-4-hydroxy-2,3,4,5-tetrahydrodipicolinate + NADH + H(+). The catalysed reaction is (S)-2,3,4,5-tetrahydrodipicolinate + NADP(+) + H2O = (2S,4S)-4-hydroxy-2,3,4,5-tetrahydrodipicolinate + NADPH + H(+). It participates in amino-acid biosynthesis; L-lysine biosynthesis via DAP pathway; (S)-tetrahydrodipicolinate from L-aspartate: step 4/4. Catalyzes the conversion of 4-hydroxy-tetrahydrodipicolinate (HTPA) to tetrahydrodipicolinate. The protein is 4-hydroxy-tetrahydrodipicolinate reductase of Burkholderia lata (strain ATCC 17760 / DSM 23089 / LMG 22485 / NCIMB 9086 / R18194 / 383).